A 451-amino-acid polypeptide reads, in one-letter code: tRNA-2-methylthio-N(6)-dimethylallyladenosine synthase (451 aa).

An MTTase N-terminal domain is found at 6–122 (RRYHIITFGC…LDQLLEQVWA (117 aa)). [4Fe-4S] cluster is bound by residues Cys15, Cys51, Cys85, Cys157, Cys161, and Cys164. A Radical SAM core domain is found at 143 to 384 (RESTVSAWVN…STQAMERSQR (242 aa)). The 65-residue stretch at 383-447 (QRYLGRVEEV…AFSLTGEALS (65 aa)) folds into the TRAM domain.

Belongs to the methylthiotransferase family. MiaB subfamily. Monomer. It depends on [4Fe-4S] cluster as a cofactor.

It is found in the cytoplasm. It carries out the reaction N(6)-dimethylallyladenosine(37) in tRNA + (sulfur carrier)-SH + AH2 + 2 S-adenosyl-L-methionine = 2-methylsulfanyl-N(6)-dimethylallyladenosine(37) in tRNA + (sulfur carrier)-H + 5'-deoxyadenosine + L-methionine + A + S-adenosyl-L-homocysteine + 2 H(+). Its function is as follows. Catalyzes the methylthiolation of N6-(dimethylallyl)adenosine (i(6)A), leading to the formation of 2-methylthio-N6-(dimethylallyl)adenosine (ms(2)i(6)A) at position 37 in tRNAs that read codons beginning with uridine. This Synechocystis sp. (strain ATCC 27184 / PCC 6803 / Kazusa) protein is tRNA-2-methylthio-N(6)-dimethylallyladenosine synthase.